The sequence spans 426 residues: Phosphomethylpyrimidine synthase (426 aa).

Residues N65, M94, Y123, H162, 184 to 186 (SRG), 225 to 228 (DGMR), and E264 contribute to the substrate site. Residue H268 coordinates Zn(2+). Residue Y291 coordinates substrate. H332 is a Zn(2+) binding site. C408, C411, and C415 together coordinate [4Fe-4S] cluster.

The protein belongs to the ThiC family. Requires [4Fe-4S] cluster as cofactor.

The enzyme catalyses 5-amino-1-(5-phospho-beta-D-ribosyl)imidazole + S-adenosyl-L-methionine = 4-amino-2-methyl-5-(phosphooxymethyl)pyrimidine + CO + 5'-deoxyadenosine + formate + L-methionine + 3 H(+). Its pathway is cofactor biosynthesis; thiamine diphosphate biosynthesis. In terms of biological role, catalyzes the synthesis of the hydroxymethylpyrimidine phosphate (HMP-P) moiety of thiamine from aminoimidazole ribotide (AIR) in a radical S-adenosyl-L-methionine (SAM)-dependent reaction. The polypeptide is Phosphomethylpyrimidine synthase (Methanococcus aeolicus (strain ATCC BAA-1280 / DSM 17508 / OCM 812 / Nankai-3)).